A 138-amino-acid polypeptide reads, in one-letter code: Putative pre-16S rRNA nuclease (138 aa).

Belongs to the YqgF nuclease family.

The protein resides in the cytoplasm. Could be a nuclease involved in processing of the 5'-end of pre-16S rRNA. This is Putative pre-16S rRNA nuclease from Clostridium tetani (strain Massachusetts / E88).